The sequence spans 88 residues: Small ribosomal subunit protein uS15 (88 aa).

A compositionally biased stretch (polar residues) spans 1–12 (MLTNTDRQQVIA). Residues 1-23 (MLTNTDRQQVIAQYQRAPGDTGS) are disordered.

This sequence belongs to the universal ribosomal protein uS15 family. In terms of assembly, part of the 30S ribosomal subunit. Forms a bridge to the 50S subunit in the 70S ribosome, contacting the 23S rRNA.

Functionally, one of the primary rRNA binding proteins, it binds directly to 16S rRNA where it helps nucleate assembly of the platform of the 30S subunit by binding and bridging several RNA helices of the 16S rRNA. Forms an intersubunit bridge (bridge B4) with the 23S rRNA of the 50S subunit in the ribosome. The chain is Small ribosomal subunit protein uS15 from Psychrobacter sp. (strain PRwf-1).